A 465-amino-acid polypeptide reads, in one-letter code: MAADDYVVADMSLAAWGRKEIEIAETEMPGLMACREEFGEAKPLKGARITGSLHMTIQTAVLIETLKSLGAEVRWASCNIFSTQDHAAAAIAETGTPVFAVKGETLEEYWTYTDRIFQWPDGQPSNMILDDGGDATMYILLGARAEAGEDVLSNPDGEEEEILFQQIKKRMAETPGFFTRQRAAIRGVTEETTTGVNRLYQLQKKGLLPFPAINVNDSVTKSKFDNKYGCKESLVDGIRRATDVMMAGKVAIVCGYGDVGKGSAQSLAGAGARVKVTEADPICALQAAMDGFEVVTLDEAIATADIIITATGNKDVVSLDHMRKMKDMVILGNIGHFDNEIQVAALRNFKWVNIKPQVDLIEFPDGKRIILLSEGRLLNLGNATGHPSFVMSASFTNQVLAQIELWTRGSQYENKVYVLPKHLDEKVARLHLAKLGANLTKLSPEQAAYIGVTPEGPFKPDHYRY.

The substrate site is built by T56, D131, and E191. 192–194 serves as a coordination point for NAD(+); sequence TTT. Substrate contacts are provided by K221 and D225. Residues N226, 255–260, E278, N313, 334–336, and N379 contribute to the NAD(+) site; these read GYGDVG and IGH.

The protein belongs to the adenosylhomocysteinase family. Requires NAD(+) as cofactor.

The protein localises to the cytoplasm. It catalyses the reaction S-adenosyl-L-homocysteine + H2O = L-homocysteine + adenosine. It functions in the pathway amino-acid biosynthesis; L-homocysteine biosynthesis; L-homocysteine from S-adenosyl-L-homocysteine: step 1/1. Its function is as follows. May play a key role in the regulation of the intracellular concentration of adenosylhomocysteine. The sequence is that of Adenosylhomocysteinase from Chelativorans sp. (strain BNC1).